The primary structure comprises 185 residues: UPF0397 protein PAM_019 (185 aa).

5 helical membrane-spanning segments follow: residues 13-33, 42-62, 69-89, 109-129, and 143-163; these read IGLSAAIFFVLSCFASIPVGF, AFLAFIAVAFGPAVGFYVGLI, FILFGNVSWNWVLCSALIGFI, IVYFWLYQVAFNFIIWGFFAP, and VYLQSFLIVISNILAYSVVGI.

Belongs to the UPF0397 family.

The protein resides in the cell membrane. The protein is UPF0397 protein PAM_019 of Onion yellows phytoplasma (strain OY-M).